The sequence spans 405 residues: MDFESSSAGPSTSYAEEPCTLSMLPQVSAVLSETSITESNVSCQLHPSRSAALNDNVRTLIYNRTDPHIQLDMRAFYNCMEYEEALQPNYHYFTGVQENITPFHREQAIDWIYDVAKEENCDGDVFLLAVSLIDRFMSVQNILKHDIQMIAGVALFIASKLKAPHPMTASKIAYYSDNSCPIDMILQWELLIVTTLQWETESPTAFSFFDFLASRIPQIHNMRGDFQTVVQKCQKMHKLATLFPSMQCAIGLYYVSNLPTQNKELAVKIKDLLANMFQLEVNLLDSYIPMVQRCMSTTPIYTSEDAEKTEPTPSAPASTQEPEAFQELKELKEEPLPTPPPEEPAFQKLVLLEPIPLSEQTPSTPLNDSGFSSDVSSPASSEKKRRRSTDWFEEDSTPPKIFKTL.

Residues 76 to 200 (FYNCMEYEEA…LIVTTLQWET (125 aa)) enclose the Cyclin N-terminal domain. The tract at residues 301-405 (YTSEDAEKTE…STPPKIFKTL (105 aa)) is disordered. The span at 311–321 (PTPSAPASTQE) shows a compositional bias: polar residues. A compositionally biased stretch (basic and acidic residues) spans 326–335 (QELKELKEEP). Over residues 358 to 380 (SEQTPSTPLNDSGFSSDVSSPAS) the composition is skewed to polar residues.

The protein belongs to the cyclin family. Cyclin D subfamily. Interacts with cdk-4; the interaction is likely involved in regulating cdk-4 activity.

In association with cdk-4, regulates the progression through the G1 phase of the cell cycle during postembryonic development. Regulates proliferation of the coelomocyte lineage and intestinal cells during late embryogenesis. In complex with cdk-4, involved in sex determination during gonadogenesis by regulating the asymmetric division of the somatic gonadal precursor cell (SGP). The polypeptide is G1/S-specific cyclin-D (Caenorhabditis elegans).